Reading from the N-terminus, the 506-residue chain is Histidine ammonia-lyase (506 aa).

The segment at residues 143–145 (ASG) is a cross-link (5-imidazolinone (Ala-Gly)). At Ser144 the chain carries 2,3-didehydroalanine (Ser).

The protein belongs to the PAL/histidase family. Contains an active site 4-methylidene-imidazol-5-one (MIO), which is formed autocatalytically by cyclization and dehydration of residues Ala-Ser-Gly.

It localises to the cytoplasm. The enzyme catalyses L-histidine = trans-urocanate + NH4(+). Its pathway is amino-acid degradation; L-histidine degradation into L-glutamate; N-formimidoyl-L-glutamate from L-histidine: step 1/3. The sequence is that of Histidine ammonia-lyase from Salmonella dublin (strain CT_02021853).